The following is a 128-amino-acid chain: Small ribosomal subunit protein uS9 (128 aa).

This sequence belongs to the universal ribosomal protein uS9 family.

This chain is Small ribosomal subunit protein uS9, found in Amoebophilus asiaticus (strain 5a2).